Here is a 346-residue protein sequence, read N- to C-terminus: N-acetyl-gamma-glutamyl-phosphate reductase (346 aa).

Cys149 is an active-site residue.

Belongs to the NAGSA dehydrogenase family. Type 1 subfamily.

It is found in the cytoplasm. It carries out the reaction N-acetyl-L-glutamate 5-semialdehyde + phosphate + NADP(+) = N-acetyl-L-glutamyl 5-phosphate + NADPH + H(+). It participates in amino-acid biosynthesis; L-arginine biosynthesis; N(2)-acetyl-L-ornithine from L-glutamate: step 3/4. Catalyzes the NADPH-dependent reduction of N-acetyl-5-glutamyl phosphate to yield N-acetyl-L-glutamate 5-semialdehyde. The polypeptide is N-acetyl-gamma-glutamyl-phosphate reductase (Geobacter sulfurreducens (strain ATCC 51573 / DSM 12127 / PCA)).